We begin with the raw amino-acid sequence, 255 residues long: Electron transfer flavoprotein beta subunit lysine methyltransferase (255 aa).

The N-terminal 32 residues, 1–32 (MAFSLCWKAPRSPWSFLQAVNNGSPLFLWRTV), are a transit peptide targeting the mitochondrion.

Belongs to the methyltransferase superfamily. ETFBKMT family. Interacts with HSPD1; this protein may possibly be a methylation substrate.

It is found in the cytoplasm. The protein resides in the mitochondrion matrix. The catalysed reaction is L-lysyl-[protein] + 3 S-adenosyl-L-methionine = N(6),N(6),N(6)-trimethyl-L-lysyl-[protein] + 3 S-adenosyl-L-homocysteine + 3 H(+). Protein-lysine methyltransferase that selectively trimethylates the flavoprotein ETFB in mitochondria. Thereby, may negatively regulate the function of ETFB in electron transfer from Acyl-CoA dehydrogenases. In Mus musculus (Mouse), this protein is Electron transfer flavoprotein beta subunit lysine methyltransferase.